Consider the following 136-residue polypeptide: S-protein homolog 17 (136 aa).

The signal sequence occupies residues 1-22 (MKNLSIFMFVFSLCMFGHVSRA).

Belongs to the plant self-incompatibility (S1) protein family.

It is found in the secreted. The polypeptide is S-protein homolog 17 (Arabidopsis thaliana (Mouse-ear cress)).